A 320-amino-acid chain; its full sequence is Chorion protein S36 (320 aa).

The first 18 residues, 1-18, serve as a signal peptide directing secretion; the sequence is MNCFLFTLFFVAAPLATA. 5 consecutive repeat copies span residues 178-181, 258-261, 266-269, 274-277, and alanine 290. The disordered stretch occupies residues 259-320; the sequence is APAQSYNAAP…YGSAPPASGY (62 aa).

Belongs to the chorion protein S36 family.

The protein localises to the secreted. Chorion membrane (egg shell) protein; plays a role in protecting the egg from the environment. This chain is Chorion protein S36 (Cp36), found in Ceratitis capitata (Mediterranean fruit fly).